The chain runs to 955 residues: 2-oxoglutarate dehydrogenase E1 component (955 aa).

It belongs to the alpha-ketoglutarate dehydrogenase family. In terms of assembly, homodimer. Part of the 2-oxoglutarate dehydrogenase (OGDH) complex composed of E1 (2-oxoglutarate dehydrogenase), E2 (dihydrolipoamide succinyltransferase) and E3 (dihydrolipoamide dehydrogenase); the complex contains multiple copies of the three enzymatic components (E1, E2 and E3). It depends on thiamine diphosphate as a cofactor.

The enzyme catalyses N(6)-[(R)-lipoyl]-L-lysyl-[protein] + 2-oxoglutarate + H(+) = N(6)-[(R)-S(8)-succinyldihydrolipoyl]-L-lysyl-[protein] + CO2. Functionally, E1 component of the 2-oxoglutarate dehydrogenase (OGDH) complex which catalyzes the decarboxylation of 2-oxoglutarate, the first step in the conversion of 2-oxoglutarate to succinyl-CoA and CO(2). In Bacillus cereus (strain ATCC 14579 / DSM 31 / CCUG 7414 / JCM 2152 / NBRC 15305 / NCIMB 9373 / NCTC 2599 / NRRL B-3711), this protein is 2-oxoglutarate dehydrogenase E1 component.